The primary structure comprises 839 residues: Periplasmic nitrate reductase (839 aa).

The tat-type signal signal peptide spans 1–34; that stretch reads MTLTRRDFIKANAAAAAATAAAVNLPLVPSMAQA. The 57-residue stretch at 46-102 folds into the 4Fe-4S Mo/W bis-MGD-type domain; it reads IKWDKAACRFCGTGCSVLVGTKGGRVVATQGDPDAPVNRGLNCIKGYFLSKIMYGED. [4Fe-4S] cluster is bound by residues Cys-53, Cys-56, Cys-60, and Cys-88. Residues Lys-90, Gln-157, Asn-182, Cys-186, 219-226, 250-254, 269-271, Met-379, Gln-383, Asn-489, 515-516, Lys-538, Asp-565, and 729-738 each bind Mo-bis(molybdopterin guanine dinucleotide); these read WGSNMAEM, STYEH, QTD, SD, and TGRVLEHWHT. Phe-805 is a binding site for substrate. 2 residues coordinate Mo-bis(molybdopterin guanine dinucleotide): Asn-813 and Lys-830.

Belongs to the prokaryotic molybdopterin-containing oxidoreductase family. NasA/NapA/NarB subfamily. As to quaternary structure, component of the periplasmic nitrate reductase NapAB complex composed of NapA and NapB. It depends on [4Fe-4S] cluster as a cofactor. Mo-bis(molybdopterin guanine dinucleotide) is required as a cofactor. In terms of processing, predicted to be exported by the Tat system. The position of the signal peptide cleavage has not been experimentally proven.

It localises to the periplasm. The catalysed reaction is 2 Fe(II)-[cytochrome] + nitrate + 2 H(+) = 2 Fe(III)-[cytochrome] + nitrite + H2O. Catalytic subunit of the periplasmic nitrate reductase complex NapAB. Receives electrons from NapB and catalyzes the reduction of nitrate to nitrite. The sequence is that of Periplasmic nitrate reductase from Laribacter hongkongensis (strain HLHK9).